The sequence spans 323 residues: Mycothiol acetyltransferase (323 aa).

Residue Glu44 coordinates 1D-myo-inositol 2-(L-cysteinylamino)-2-deoxy-alpha-D-glucopyranoside. Position 98–100 (98–100 (LAV)) interacts with acetyl-CoA. The 151-residue stretch at 173–323 (VSLRAFIPGQ…DVMYGPKNGG (151 aa)) folds into the N-acetyltransferase domain. 3 residues coordinate 1D-myo-inositol 2-(L-cysteinylamino)-2-deoxy-alpha-D-glucopyranoside: Glu200, Lys240, and Glu253. Acetyl-CoA-binding positions include 257–259 (VGV) and 264–270 (QGMGLGK). Residue Tyr291 coordinates 1D-myo-inositol 2-(L-cysteinylamino)-2-deoxy-alpha-D-glucopyranoside.

This sequence belongs to the acetyltransferase family. MshD subfamily. In terms of assembly, monomer.

The catalysed reaction is 1D-myo-inositol 2-(L-cysteinylamino)-2-deoxy-alpha-D-glucopyranoside + acetyl-CoA = mycothiol + CoA + H(+). Its function is as follows. Catalyzes the transfer of acetyl from acetyl-CoA to desacetylmycothiol (Cys-GlcN-Ins) to form mycothiol. This is Mycothiol acetyltransferase from Arthrobacter sp. (strain FB24).